Reading from the N-terminus, the 70-residue chain is DNA-directed RNA polymerase subunit omega (70 aa).

Belongs to the RNA polymerase subunit omega family. As to quaternary structure, in cyanobacteria the RNAP catalytic core is composed of 2 alpha, 1 beta, 1 beta', 1 gamma and 1 omega subunit. When a sigma factor is associated with the core the holoenzyme is formed, which can initiate transcription.

It catalyses the reaction RNA(n) + a ribonucleoside 5'-triphosphate = RNA(n+1) + diphosphate. Promotes RNA polymerase assembly. Latches the N- and C-terminal regions of the beta' subunit thereby facilitating its interaction with the beta and alpha subunits. The sequence is that of DNA-directed RNA polymerase subunit omega from Prochlorococcus marinus (strain NATL1A).